The chain runs to 295 residues: MPISLPKVRGIYRYSVLMSKITWLNVGGQADILFKPRDIEDLIYLIKNTKLPISVIGATSNMIVRDSGIRGITVKLGKEFAYIKYKSNNSIIAGGAALLSNLAYFAGEQQVSGLEFLVGIPGTIGGGIEMNAGAYGSDVASVVQSIKAVNLSDGNLYEFSSKEMGYVYRGHSLKGQWIFIEAEFKGVSSGHEVILHRLKEIINKKNKSQPVRGKTAGCIFKNPRAYQAWKLIDGSGCRGLNNGGAKISKKHCNFLLNYNNATASDLENLGNKVRNTVKDKFNIELEWEIRVLGSH.

The FAD-binding PCMH-type domain occupies Val26–Ser189. Residue Arg169 is part of the active site. Cys218 functions as the Proton donor in the catalytic mechanism. The active site involves Glu288.

This sequence belongs to the MurB family. The cofactor is FAD.

Its subcellular location is the cytoplasm. The enzyme catalyses UDP-N-acetyl-alpha-D-muramate + NADP(+) = UDP-N-acetyl-3-O-(1-carboxyvinyl)-alpha-D-glucosamine + NADPH + H(+). It functions in the pathway cell wall biogenesis; peptidoglycan biosynthesis. Functionally, cell wall formation. The protein is UDP-N-acetylenolpyruvoylglucosamine reductase of Wolbachia sp. subsp. Brugia malayi (strain TRS).